A 446-amino-acid polypeptide reads, in one-letter code: Protein adenylyltransferase FICD (446 aa).

Residues 1 to 18 (MAVTECEWASLGSRIGLR) lie on the Cytoplasmic side of the membrane. The chain crosses the membrane as a helical; Signal-anchor for type II membrane protein span at residues 19-39 (AALVLLSGSLLVVLFPLSGLE). Topologically, residues 40–446 (HQYRTALNIL…ECKQTITIKT (407 aa)) are lumenal. TPR repeat units lie at residues 94 to 127 (AKAA…DPDH) and 128 to 161 (VDAL…SPHN). Residues 218 to 223 (TVAIEG) carry the Inhibitory (S/T)XXXE(G/N) motif motif. E222 contacts ATP. N263 carries N-linked (GlcNAc...) asparagine glycosylation. One can recognise a Fido domain in the interval 273-408 (VTIDNILEIH…VRPFIRFIAK (136 aa)). 304–307 (VGHH) is an ATP binding site. H351 is an active-site residue. Residues 355-362 (DGNGRTSR), 387-388 (YY), and N395 contribute to the ATP site.

The protein belongs to the fic family. As to quaternary structure, homodimer. Mg(2+) serves as cofactor. Mn(2+) is required as a cofactor.

The protein resides in the endoplasmic reticulum membrane. It carries out the reaction L-tyrosyl-[protein] + ATP = O-(5'-adenylyl)-L-tyrosyl-[protein] + diphosphate. The catalysed reaction is 3-O-(5'-adenylyl)-L-threonyl-[protein] + H2O = L-threonyl-[protein] + AMP + H(+). The enzyme catalyses L-threonyl-[protein] + ATP = 3-O-(5'-adenylyl)-L-threonyl-[protein] + diphosphate. The side chain of Glu-222 determines which of the two opposing activities (AMPylase or de-AMPylase) will take place. In response to endoplasmic reticulum stress, mediates de-AMPylase activity. Adenylyltransferase activity is inhibited by the inhibitory helix present at the N-terminus: Glu-222 binds ATP and competes with ATP-binding at Arg-362, thereby preventing adenylyltransferase activity. In unstressed cells, disengagement of Glu-222 promotes adenylyltransferase activity. Activation dissociates ATP-binding from Glu-222, allowing ordered binding of the entire ATP moiety with the alpha-phosphate in an orientation that is productive for accepting an incoming target hydroxyl side chain. Protein that can both mediate the addition of adenosine 5'-monophosphate (AMP) to specific residues of target proteins (AMPylation), and the removal of the same modification from target proteins (de-AMPylation), depending on the context. The side chain of Glu-222 determines which of the two opposing activities (AMPylase or de-AMPylase) will take place. Acts as a key regulator of the ERN1/IRE1-mediated unfolded protein response (UPR) by mediating AMPylation or de-AMPylation of HSPA5/BiP. In unstressed cells, acts as an adenylyltransferase by mediating AMPylation of HSPA5/BiP at 'Thr-518', thereby inactivating it. In response to endoplasmic reticulum stress, acts as a phosphodiesterase by mediating removal of ATP (de-AMPylation) from HSPA5/BiP at 'Thr-518', leading to restore HSPA5/BiP activity. In Xenopus tropicalis (Western clawed frog), this protein is Protein adenylyltransferase FICD.